The chain runs to 448 residues: tRNA-2-methylthio-N(6)-dimethylallyladenosine synthase (448 aa).

One can recognise an MTTase N-terminal domain in the interval 2 to 119 (KKLYIKTFGC…LSDLIAKRRE (118 aa)). Residues Cys-11, Cys-48, Cys-82, Cys-156, Cys-160, and Cys-163 each contribute to the [4Fe-4S] cluster site. A Radical SAM core domain is found at 142-377 (RQTRGSAYVS…LVESQANQIS (236 aa)). Residues 378–444 (QKMLGNIERV…NYTLRGKLVE (67 aa)) form the TRAM domain.

Belongs to the methylthiotransferase family. MiaB subfamily. Monomer. [4Fe-4S] cluster serves as cofactor.

It is found in the cytoplasm. The catalysed reaction is N(6)-dimethylallyladenosine(37) in tRNA + (sulfur carrier)-SH + AH2 + 2 S-adenosyl-L-methionine = 2-methylsulfanyl-N(6)-dimethylallyladenosine(37) in tRNA + (sulfur carrier)-H + 5'-deoxyadenosine + L-methionine + A + S-adenosyl-L-homocysteine + 2 H(+). In terms of biological role, catalyzes the methylthiolation of N6-(dimethylallyl)adenosine (i(6)A), leading to the formation of 2-methylthio-N6-(dimethylallyl)adenosine (ms(2)i(6)A) at position 37 in tRNAs that read codons beginning with uridine. The chain is tRNA-2-methylthio-N(6)-dimethylallyladenosine synthase from Polynucleobacter necessarius subsp. necessarius (strain STIR1).